The following is a 391-amino-acid chain: GATA-binding factor 6-A (391 aa).

A disordered region spans residues 57–111 (GAHSVNSHWSQATSESSSFNNSSPHTSSRYHYPPSPPMHNGSTRDTGYSSSLTVS). The span at 66–83 (SQATSESSSFNNSSPHTS) shows a compositional bias: low complexity. Positions 96 to 111 (NGSTRDTGYSSSLTVS) are enriched in polar residues. 2 consecutive GATA-type zinc fingers follow at residues 182-206 (CVNCGSVQTPLWRRDGTGHFLCNAC) and 236-260 (CANCHTSTTTLWRRNTEGEPVCNAC). The disordered stretch occupies residues 274 to 355 (AMKKEGIQTR…TESTSPNSNT (82 aa)). Over residues 282 to 291 (TRKRKPKTLN) the composition is skewed to basic residues. Residues 292–319 (KSKSSSSNGNSSHQISMTPTSTTSSTNS) show a composition bias toward low complexity. Residues 326–355 (GSPSQNTTPVVASSLMSTQQTESTSPNSNT) show a composition bias toward polar residues.

As to expression, in embryos, expressed in the presumptive heart mesoderm. In adults, expressed at high levels in heart, small intestine, and stomach and at lower levels in lung, pancreas and colon.

The protein localises to the nucleus. Transcriptional activator that binds 5'-GATA-3'-containing motifs within gene promoters. Regulates cardiac-specific transcription during embryogenesis and thereby cardiogenesis. The protein is GATA-binding factor 6-A (gata6-a) of Xenopus laevis (African clawed frog).